The following is a 297-amino-acid chain: Homeobox protein HMX3 (297 aa).

Disordered regions lie at residues 24–43 (NSDS…KAGL) and 96–172 (AAQK…RKKK). 2 stretches are compositionally biased toward basic and acidic residues: residues 109–123 (TDRD…SDPD) and 145–166 (EDGK…ADKK). Residues 170-229 (KKKTRTVFSRSQVFQLESTFDMKRYLSSSERAGLAASLHLTETQVKIWFQNRRNKWKRQL) constitute a DNA-binding region (homeobox).

The protein belongs to the HMX homeobox family. As to expression, expressed in the ear placode and vesicle and in cells forming the vestibulo-acoustic ganglion. Also expressed in the lateral line.

It localises to the nucleus. Functionally, transcription factor involved in specification of neuronal cell types and which is required for inner ear and hypothalamus development. Binds to the 5'-CAAGTG-3' core sequence. This Danio rerio (Zebrafish) protein is Homeobox protein HMX3 (hmx3).